The primary structure comprises 58 residues: Leucine zipper protein 6 (58 aa).

Widely expressed, highest levels found in brain, placenta, spleen, testis, and ovary. Up-regulated in some tumor cells.

This chain is Leucine zipper protein 6 (LUZP6), found in Homo sapiens (Human).